A 229-amino-acid polypeptide reads, in one-letter code: Ras-related protein rab-39 (229 aa).

73–77 (DTAGQ) contributes to the GTP binding site. S-geranylgeranyl cysteine attachment occurs at residues Cys227 and Cys229. At Cys229 the chain carries Cysteine methyl ester.

Belongs to the small GTPase superfamily. Rab family. As to quaternary structure, interacts (in GTP-bound form) with Ras association domain-containing protein rsf-1.

The protein resides in the cell membrane. It is found in the cytoplasmic vesicle membrane. It localises to the golgi apparatus. Small GTPases Rab involved in autophagy. The small GTPases Rab are key regulators of intracellular membrane trafficking, from the formation of transport vesicles to their fusion with membranes. Rabs cycle between an inactive GDP-bound form and an active GTP-bound form that is able to recruit to membranes different sets of downstream effectors directly responsible for vesicle formation, movement, tethering and fusion. Involved in positively regulating the oxidative stress response, perhaps in concert with the Ras association domain-containing protein rsf-1. The sequence is that of Ras-related protein rab-39 from Caenorhabditis elegans.